We begin with the raw amino-acid sequence, 494 residues long: Inosine-5'-monophosphate dehydrogenase (494 aa).

CBS domains are found at residues 93-154 (IIRN…NEKI) and 158-217 (MTTD…CKDM). Residues Asp-251 and 301 to 303 (GIG) contribute to the NAD(+) site. Residues Gly-303 and Gly-305 each contribute to the K(+) site. Ser-306 is a binding site for IMP. Cys-308 is a binding site for K(+). The Thioimidate intermediate role is filled by Cys-308. Residues 341-343 (DGG), 364-365 (GS), and 388-392 (YRGMG) each bind IMP. Arg-406 serves as the catalytic Proton acceptor. Glu-421 is an IMP binding site. Positions 475, 476, and 477 each coordinate K(+).

Belongs to the IMPDH/GMPR family. In terms of assembly, homotetramer. K(+) is required as a cofactor.

The enzyme catalyses IMP + NAD(+) + H2O = XMP + NADH + H(+). It functions in the pathway purine metabolism; XMP biosynthesis via de novo pathway; XMP from IMP: step 1/1. With respect to regulation, mycophenolic acid (MPA) is a non-competitive inhibitor that prevents formation of the closed enzyme conformation by binding to the same site as the amobile flap. In contrast, mizoribine monophosphate (MZP) is a competitive inhibitor that induces the closed conformation. MPA is a potent inhibitor of mammalian IMPDHs but a poor inhibitor of the bacterial enzymes. MZP is a more potent inhibitor of bacterial IMPDH. Functionally, catalyzes the conversion of inosine 5'-phosphate (IMP) to xanthosine 5'-phosphate (XMP), the first committed and rate-limiting step in the de novo synthesis of guanine nucleotides, and therefore plays an important role in the regulation of cell growth. This Chlorobaculum parvum (strain DSM 263 / NCIMB 8327) (Chlorobium vibrioforme subsp. thiosulfatophilum) protein is Inosine-5'-monophosphate dehydrogenase.